Here is a 432-residue protein sequence, read N- to C-terminus: Benzoyl-CoA reductase subunit B (432 aa).

This sequence belongs to the FldB/FldC dehydratase alpha/beta subunit family. As to quaternary structure, heterotetramer composed of A, B, C, and D subunits. Iron-sulfur cluster serves as cofactor. An oxidized flavin is required as a cofactor.

The enzyme catalyses cyclohexa-1,5-diene-1-carbonyl-CoA + oxidized 2[4Fe-4S]-[ferredoxin] + 2 ADP + 2 phosphate = reduced 2[4Fe-4S]-[ferredoxin] + benzoyl-CoA + 2 ATP + 2 H2O. It carries out the reaction 3-hydroxybenzoyl-CoA + AH2 + 2 ATP + 2 H2O = 3-hydroxycyclohexa-1,5-diene-1-carbonyl-CoA + A + 2 ADP + 2 phosphate + 2 H(+). Catalyzes the anaerobic reduction of benzoyl-CoA and 3-hydroxybenzoyl-CoA to form cyclohexa-1,5-diene-1-carbonyl-CoA and 3-hydroxycyclohexa-1,5-diene-1-carbonyl-CoA, respectively. The enzyme also reduces other benzoyl-CoA analogs with small substituents at the aromatic ring. The polypeptide is Benzoyl-CoA reductase subunit B (bcrB) (Thauera aromatica).